We begin with the raw amino-acid sequence, 268 residues long: tRNA pseudouridine synthase A (268 aa).

Aspartate 52 serves as the catalytic Nucleophile. Position 110 (tyrosine 110) interacts with substrate.

Belongs to the tRNA pseudouridine synthase TruA family. Homodimer.

The enzyme catalyses uridine(38/39/40) in tRNA = pseudouridine(38/39/40) in tRNA. Formation of pseudouridine at positions 38, 39 and 40 in the anticodon stem and loop of transfer RNAs. This is tRNA pseudouridine synthase A from Prochlorococcus marinus (strain AS9601).